A 549-amino-acid polypeptide reads, in one-letter code: Probable protein kinase UbiB (549 aa).

The 379-residue stretch at 123 to 501 (DFDDTPLASA…QQKAHKSNYL (379 aa)) folds into the Protein kinase domain. ATP-binding positions include 129–137 (LASASISQV) and K152. The Proton acceptor role is filled by D287. The next 2 helical transmembrane spans lie at 498-518 (SNYLLITSAILVICGTILLNQ) and 520-540 (ATLWPSYGSIGIGITLWVLGW).

This sequence belongs to the ABC1 family. UbiB subfamily.

It is found in the cell inner membrane. It participates in cofactor biosynthesis; ubiquinone biosynthesis [regulation]. Functionally, is probably a protein kinase regulator of UbiI activity which is involved in aerobic coenzyme Q (ubiquinone) biosynthesis. The polypeptide is Probable protein kinase UbiB (Shewanella pealeana (strain ATCC 700345 / ANG-SQ1)).